Here is a 632-residue protein sequence, read N- to C-terminus: Chaperone protein HtpG (632 aa).

The interval 1 to 343 is a; substrate-binding; that stretch reads MSEQTINNKE…SNDLALNVSR (343 aa). Positions 344–560 are b; the sequence is EILQDNKVTQ…DFEMGTQMAK (217 aa). A c region spans residues 561 to 632; the sequence is LLEAAGQAAP…LSAMNQLLSK (72 aa).

Belongs to the heat shock protein 90 family. As to quaternary structure, homodimer.

The protein localises to the cytoplasm. Molecular chaperone. Has ATPase activity. This Aliivibrio salmonicida (strain LFI1238) (Vibrio salmonicida (strain LFI1238)) protein is Chaperone protein HtpG.